A 124-amino-acid polypeptide reads, in one-letter code: Large ribosomal subunit protein eL22 (124 aa).

It belongs to the eukaryotic ribosomal protein eL22 family. In terms of assembly, component of the large ribosomal subunit. Mature ribosomes consist of a small (40S) and a large (60S) subunit. The 40S subunit contains about 32 different proteins and 1 molecule of RNA (18S). The 60S subunit contains 45 different proteins and 3 molecules of RNA (25S, 5.8S and 5S).

It localises to the cytoplasm. Component of the ribosome, a large ribonucleoprotein complex responsible for the synthesis of proteins in the cell. The small ribosomal subunit (SSU) binds messenger RNAs (mRNAs) and translates the encoded message by selecting cognate aminoacyl-transfer RNA (tRNA) molecules. The large subunit (LSU) contains the ribosomal catalytic site termed the peptidyl transferase center (PTC), which catalyzes the formation of peptide bonds, thereby polymerizing the amino acids delivered by tRNAs into a polypeptide chain. The nascent polypeptides leave the ribosome through a tunnel in the LSU and interact with protein factors that function in enzymatic processing, targeting, and the membrane insertion of nascent chains at the exit of the ribosomal tunnel. This Candida albicans (strain SC5314 / ATCC MYA-2876) (Yeast) protein is Large ribosomal subunit protein eL22.